The following is a 392-amino-acid chain: Spermatogenesis associated 6-like protein (392 aa).

Phosphoserine is present on residues Ser-260 and Ser-263. A compositionally biased stretch (low complexity) spans 286–301 (SCLDSSQFGKSSSSKQ). Residues 286 to 305 (SCLDSSQFGKSSSSKQGDAD) are disordered.

It belongs to the SPATA6 family.

This chain is Spermatogenesis associated 6-like protein (SPATA6L), found in Homo sapiens (Human).